The primary structure comprises 663 residues: DNA ligase 1 (663 aa).

NAD(+) contacts are provided by residues aspartate 28–aspartate 32 and serine 76–leucine 77. The active-site N6-AMP-lysine intermediate is the lysine 118. Arginine 139, glutamate 173, and lysine 310 together coordinate NAD(+). Residues cysteine 403, cysteine 406, cysteine 419, and cysteine 425 each contribute to the Zn(2+) site. A BRCT domain is found at valine 583 to lysine 663.

Belongs to the NAD-dependent DNA ligase family. LigA subfamily. Mg(2+) is required as a cofactor. The cofactor is Mn(2+).

It catalyses the reaction NAD(+) + (deoxyribonucleotide)n-3'-hydroxyl + 5'-phospho-(deoxyribonucleotide)m = (deoxyribonucleotide)n+m + AMP + beta-nicotinamide D-nucleotide.. In terms of biological role, DNA ligase that catalyzes the formation of phosphodiester linkages between 5'-phosphoryl and 3'-hydroxyl groups in double-stranded DNA using NAD as a coenzyme and as the energy source for the reaction. It is essential for DNA replication and repair of damaged DNA. In Clostridium acetobutylicum (strain ATCC 824 / DSM 792 / JCM 1419 / IAM 19013 / LMG 5710 / NBRC 13948 / NRRL B-527 / VKM B-1787 / 2291 / W), this protein is DNA ligase 1.